The primary structure comprises 256 residues: 1-(5-phosphoribosyl)-5-[(5-phosphoribosylamino)methylideneamino] imidazole-4-carboxamide isomerase (256 aa).

Aspartate 8 functions as the Proton acceptor in the catalytic mechanism. Aspartate 130 functions as the Proton donor in the catalytic mechanism.

Belongs to the HisA/HisF family.

Its subcellular location is the cytoplasm. The catalysed reaction is 1-(5-phospho-beta-D-ribosyl)-5-[(5-phospho-beta-D-ribosylamino)methylideneamino]imidazole-4-carboxamide = 5-[(5-phospho-1-deoxy-D-ribulos-1-ylimino)methylamino]-1-(5-phospho-beta-D-ribosyl)imidazole-4-carboxamide. The protein operates within amino-acid biosynthesis; L-histidine biosynthesis; L-histidine from 5-phospho-alpha-D-ribose 1-diphosphate: step 4/9. The polypeptide is 1-(5-phosphoribosyl)-5-[(5-phosphoribosylamino)methylideneamino] imidazole-4-carboxamide isomerase (Pelodictyon phaeoclathratiforme (strain DSM 5477 / BU-1)).